Reading from the N-terminus, the 442-residue chain is Proline--tRNA ligase (442 aa).

It belongs to the class-II aminoacyl-tRNA synthetase family. ProS type 2 subfamily. As to quaternary structure, homodimer.

The protein localises to the cytoplasm. It carries out the reaction tRNA(Pro) + L-proline + ATP = L-prolyl-tRNA(Pro) + AMP + diphosphate. Its function is as follows. Catalyzes the attachment of proline to tRNA(Pro) in a two-step reaction: proline is first activated by ATP to form Pro-AMP and then transferred to the acceptor end of tRNA(Pro). The protein is Proline--tRNA ligase of Brucella melitensis biotype 2 (strain ATCC 23457).